The sequence spans 383 residues: NifS-like protein (383 aa).

Residues 58–59 and 184–186 contribute to the pyridoxal 5'-phosphate site; these read SE and SIN.

Belongs to the class-V pyridoxal-phosphate-dependent aminotransferase family. NifS/IscS subfamily. The cofactor is pyridoxal 5'-phosphate.

Its subcellular location is the virion. In African swine fever virus (strain Badajoz 1971 Vero-adapted) (Ba71V), this protein is NifS-like protein.